The sequence spans 224 residues: Urease accessory protein UreF (224 aa).

This sequence belongs to the UreF family. As to quaternary structure, ureD, UreF and UreG form a complex that acts as a GTP-hydrolysis-dependent molecular chaperone, activating the urease apoprotein by helping to assemble the nickel containing metallocenter of UreC. The UreE protein probably delivers the nickel.

The protein localises to the cytoplasm. Its function is as follows. Required for maturation of urease via the functional incorporation of the urease nickel metallocenter. The sequence is that of Urease accessory protein UreF from Ectopseudomonas mendocina (strain ymp) (Pseudomonas mendocina).